The following is a 310-amino-acid chain: GPN-loop GTPase 2 (310 aa).

Position 2 is an N-acetylalanine (A2). Position 19–24 (19–24) interacts with GTP; it reads GSGKTT. Positions 76–78 match the Gly-Pro-Asn (GPN)-loop; involved in dimer interface motif; the sequence is GPN. 178-181 contributes to the GTP binding site; it reads SKMD.

This sequence belongs to the GPN-loop GTPase family. In terms of assembly, heterodimers with GPN1 or GPN3. Binds to RNA polymerase II (RNAPII).

Small GTPase required for proper localization of RNA polymerase II and III (RNAPII and RNAPIII). May act at an RNAP assembly step prior to nuclear import. This is GPN-loop GTPase 2 from Mus musculus (Mouse).